Here is a 607-residue protein sequence, read N- to C-terminus: UvrABC system protein C (607 aa).

In terms of domain architecture, GIY-YIG spans Gly-16–Ile-94. Residues Asn-203–Val-238 form the UVR domain.

This sequence belongs to the UvrC family. Interacts with UvrB in an incision complex.

The protein localises to the cytoplasm. The UvrABC repair system catalyzes the recognition and processing of DNA lesions. UvrC both incises the 5' and 3' sides of the lesion. The N-terminal half is responsible for the 3' incision and the C-terminal half is responsible for the 5' incision. This Pseudomonas fluorescens (strain SBW25) protein is UvrABC system protein C.